Consider the following 318-residue polypeptide: Curved DNA-binding protein (318 aa).

The 65-residue stretch at 5 to 69 (DYYKILGVEP…QKRAEFDEIR (65 aa)) folds into the J domain. Residues 111-130 (GGGNPFGGARQQQRSAGRRG) are disordered.

The protein localises to the cytoplasm. The protein resides in the nucleoid. DNA-binding protein that preferentially recognizes a curved DNA sequence. It is probably a functional analog of DnaJ; displays overlapping activities with DnaJ, but functions under different conditions, probably acting as a molecular chaperone in an adaptive response to environmental stresses other than heat shock. Lacks autonomous chaperone activity; binds native substrates and targets them for recognition by DnaK. Its activity is inhibited by the binding of CbpM. This chain is Curved DNA-binding protein, found in Pseudomonas putida (strain GB-1).